The following is a 471-amino-acid chain: Heparan-sulfate 6-O-sulfotransferase 3 (471 aa).

Over 1–4 (MDER) the chain is Cytoplasmic. Residues 5–27 (FNKWLLTPVLTLLFVVIMYQYVS) traverse the membrane as a helical; Signal-anchor for type II membrane protein segment. The Lumenal portion of the chain corresponds to 28 to 471 (PSCTSSCTNF…EDYNSQVVRW (444 aa)). The disordered stretch occupies residues 39–122 (EQPRAGEAGP…EAPENGSLPR (84 aa)). Residues 41–62 (PRAGEAGPPAVPGPARRAQAPP) are compositionally biased toward low complexity. Over residues 70 to 81 (QLPPPPRGPPEG) the composition is skewed to pro residues. The segment covering 88 to 114 (PEEEDEEPGDPREGEEEEEEDEPDPEA) has biased composition (acidic residues). N-linked (GlcNAc...) asparagine glycans are attached at residues Asn-117 and Asn-128. 152 to 160 (HIQKTGGTT) serves as a coordination point for 3'-phosphoadenylyl sulfate. Residues 182–183 (KK), Arg-199, Trp-204, and His-209 contribute to the substrate site. His-209 functions as the Proton acceptor in the catalytic mechanism. Asn-231 is a glycosylation site (N-linked (GlcNAc...) asparagine). Positions 245 and 253 each coordinate 3'-phosphoadenylyl sulfate. The substrate site is built by His-257 and Trp-264. Residues Asn-324 and Asn-329 are each glycosylated (N-linked (GlcNAc...) asparagine). Position 377–379 (377–379 (TQF)) interacts with 3'-phosphoadenylyl sulfate. N-linked (GlcNAc...) asparagine glycosylation is present at Asn-380. Residue 383–384 (RA) participates in 3'-phosphoadenylyl sulfate binding. The tract at residues 422–471 (TKQLEHQRDRQKRREERRLQREHRDHQWPKEDGAAEGTVTEDYNSQVVRW) is disordered. A compositionally biased stretch (basic and acidic residues) spans 423–454 (KQLEHQRDRQKRREERRLQREHRDHQWPKEDG). Residues 462–471 (EDYNSQVVRW) are compositionally biased toward polar residues.

This sequence belongs to the sulfotransferase 6 family.

The protein localises to the membrane. It carries out the reaction alpha-D-glucosaminyl-[heparan sulfate](n) + 3'-phosphoadenylyl sulfate = 6-sulfo-alpha-D-glucosaminyl-[heparan sulfate](n) + adenosine 3',5'-bisphosphate + H(+). Its function is as follows. 6-O-sulfation enzyme which catalyzes the transfer of sulfate from 3'-phosphoadenosine 5'-phosphosulfate (PAPS) to position 6 of the N-sulfoglucosamine residue (GlcNS) of heparan sulfate. This is Heparan-sulfate 6-O-sulfotransferase 3 (HS6ST3) from Homo sapiens (Human).